The chain runs to 557 residues: Warthog protein 4 (557 aa).

The first 20 residues, Met-1–Gly-20, serve as a signal peptide directing secretion. Residues Gln-272–Gln-308 form a disordered region. Over residues Gly-287–Gln-308 the composition is skewed to low complexity.

Belongs to the hedgehog family. Post-translationally, the C-terminal domain displays an autoproteolysis activity.

Its subcellular location is the secreted. It is found in the cell surface. The protein resides in the cell membrane. The protein localises to the extracellular space. Functionally, intercellular signal essential for a variety of patterning events during development. The protein is Warthog protein 4 (wrt-4) of Caenorhabditis elegans.